Here is a 330-residue protein sequence, read N- to C-terminus: Glycerol-3-phosphate dehydrogenase [NAD(P)+] 1 (330 aa).

Positions 15, 35, and 105 each coordinate NADPH. The sn-glycerol 3-phosphate site is built by lysine 105, glycine 133, and threonine 135. Position 137 (alanine 137) interacts with NADPH. Sn-glycerol 3-phosphate-binding residues include lysine 188, aspartate 241, serine 251, arginine 252, and asparagine 253. Catalysis depends on lysine 188, which acts as the Proton acceptor. Arginine 252 contacts NADPH. NADPH is bound by residues isoleucine 276 and glutamate 278.

Belongs to the NAD-dependent glycerol-3-phosphate dehydrogenase family.

It localises to the cytoplasm. It catalyses the reaction sn-glycerol 3-phosphate + NAD(+) = dihydroxyacetone phosphate + NADH + H(+). It carries out the reaction sn-glycerol 3-phosphate + NADP(+) = dihydroxyacetone phosphate + NADPH + H(+). The protein operates within membrane lipid metabolism; glycerophospholipid metabolism. Its function is as follows. Catalyzes the reduction of the glycolytic intermediate dihydroxyacetone phosphate (DHAP) to sn-glycerol 3-phosphate (G3P), the key precursor for phospholipid synthesis. The polypeptide is Glycerol-3-phosphate dehydrogenase [NAD(P)+] 1 (Sphingopyxis alaskensis (strain DSM 13593 / LMG 18877 / RB2256) (Sphingomonas alaskensis)).